The following is a 531-amino-acid chain: Phosphomethylpyrimidine synthase (531 aa).

Residues Asn-167, Met-196, Tyr-225, His-261, 281–283, 322–325, and Glu-361 each bind substrate; these read SRG and DALR. His-365 contributes to the Zn(2+) binding site. Tyr-388 lines the substrate pocket. Position 429 (His-429) interacts with Zn(2+). [4Fe-4S] cluster contacts are provided by Cys-511, Cys-514, and Cys-519.

Belongs to the ThiC family. It depends on [4Fe-4S] cluster as a cofactor.

It catalyses the reaction 5-amino-1-(5-phospho-beta-D-ribosyl)imidazole + S-adenosyl-L-methionine = 4-amino-2-methyl-5-(phosphooxymethyl)pyrimidine + CO + 5'-deoxyadenosine + formate + L-methionine + 3 H(+). Its pathway is cofactor biosynthesis; thiamine diphosphate biosynthesis. Functionally, catalyzes the synthesis of the hydroxymethylpyrimidine phosphate (HMP-P) moiety of thiamine from aminoimidazole ribotide (AIR) in a radical S-adenosyl-L-methionine (SAM)-dependent reaction. This is Phosphomethylpyrimidine synthase from Chlorobium chlorochromatii (strain CaD3).